Here is a 224-residue protein sequence, read N- to C-terminus: Cytidylate kinase (224 aa).

11 to 19 (GPAGAGKST) serves as a coordination point for ATP.

It belongs to the cytidylate kinase family. Type 1 subfamily.

Its subcellular location is the cytoplasm. The catalysed reaction is CMP + ATP = CDP + ADP. It catalyses the reaction dCMP + ATP = dCDP + ADP. This is Cytidylate kinase from Lysinibacillus sphaericus (strain C3-41).